Consider the following 285-residue polypeptide: Bifunctional protein FolD (285 aa).

Residues 166–168 (GAS) and isoleucine 232 contribute to the NADP(+) site.

It belongs to the tetrahydrofolate dehydrogenase/cyclohydrolase family. In terms of assembly, homodimer.

It catalyses the reaction (6R)-5,10-methylene-5,6,7,8-tetrahydrofolate + NADP(+) = (6R)-5,10-methenyltetrahydrofolate + NADPH. The enzyme catalyses (6R)-5,10-methenyltetrahydrofolate + H2O = (6R)-10-formyltetrahydrofolate + H(+). It participates in one-carbon metabolism; tetrahydrofolate interconversion. The NAD(+)-dependent dehydrogenase is activated by inorganic phosphate. Its function is as follows. Catalyzes the oxidation of 5,10-methylenetetrahydrofolate to 5,10-methenyltetrahydrofolate and then the hydrolysis of 5,10-methenyltetrahydrofolate to 10-formyltetrahydrofolate. The sequence is that of Bifunctional protein FolD from Photobacterium phosphoreum.